We begin with the raw amino-acid sequence, 329 residues long: DNA-directed RNA polymerase subunit alpha (329 aa).

The interval 1 to 235 (MQGSVTEFLK…EQLDAFVDLR (235 aa)) is alpha N-terminal domain (alpha-NTD). Positions 249-329 (FDPILLRPVD…NWPPASIAED (81 aa)) are alpha C-terminal domain (alpha-CTD).

It belongs to the RNA polymerase alpha chain family. Homodimer. The RNAP catalytic core consists of 2 alpha, 1 beta, 1 beta' and 1 omega subunit. When a sigma factor is associated with the core the holoenzyme is formed, which can initiate transcription.

It catalyses the reaction RNA(n) + a ribonucleoside 5'-triphosphate = RNA(n+1) + diphosphate. Functionally, DNA-dependent RNA polymerase catalyzes the transcription of DNA into RNA using the four ribonucleoside triphosphates as substrates. This is DNA-directed RNA polymerase subunit alpha from Actinobacillus pleuropneumoniae serotype 5b (strain L20).